Here is a 473-residue protein sequence, read N- to C-terminus: Trehalose-6-phosphate synthase (473 aa).

A D-glucose 6-phosphate-binding site is contributed by Arg10. 21–22 (GG) lines the UDP-alpha-D-glucose pocket. D-glucose 6-phosphate contacts are provided by Tyr76 and Asp130. Arg262 and Lys267 together coordinate UDP-alpha-D-glucose. Arg300 provides a ligand contact to D-glucose 6-phosphate. UDP-alpha-D-glucose-binding positions include Phe339 and 365-369 (LVAKE). The segment at 454–473 (TPRSPERQQQNNVATFPKLA) is disordered.

It belongs to the glycosyltransferase 20 family. Homotetramer.

It carries out the reaction D-glucose 6-phosphate + UDP-alpha-D-glucose = alpha,alpha-trehalose 6-phosphate + UDP + H(+). The protein operates within glycan biosynthesis; trehalose biosynthesis. Its function is as follows. Probably involved in the osmoprotection via the biosynthesis of trehalose. Catalyzes the transfer of glucose from UDP-alpha-D-glucose (UDP-Glc) to D-glucose 6-phosphate (Glc-6-P) to form trehalose-6-phosphate. Acts with retention of the anomeric configuration of the UDP-sugar donor. This Salmonella choleraesuis (strain SC-B67) protein is Trehalose-6-phosphate synthase.